The chain runs to 919 residues: MAASRGPPLLGFRALALALLLAILLLLGCSAAAAYAGAEGVLRQVVGRRGDDGGGGNFFEPFNVTYDHRAVLIGGKRRMLVSAGLHYPRATPEMWPSLIAKCKEGGADVIETYVFWNGHEPAKGQYYFEERFDLVKFAKLVAAEGLFLFLRIGPYACAEWNFGGFPVWLRDIPGIEFRTDNEPFKAEMQTFVTKIVTLMKEEKLYSWQGGPIILQQIENEYGNIQGNYGQAGKRYMQWAAQMAIGLDTGIPWVMCRQTDAPEEIIDTCNAFYCDGFKPNSYNKPTIWTEDWDGWYADWGGALPHRPAEDSAFAVARFYQRGGSLQNYYMYFGGTNFARTAGGPLQITSYDYDAPIDEYGILRQPKWGHLKDLHTAIKLCEPALIAVDGSPQYIKLGSMQEAHVYSTGEVHTNGSMAGNAQICSAFLANIDEHKYASVWIFGKSYSLPPWSVSILPDCENVAFNTARIGAQTSVFTVESGSPSRSSRHKPSILSLTSGGPYLSSTWWTSKETIGTWGGNNFAVQGILEHLNVTKDISDYLWYTTRVNISDADVAFWSSKGVLPSLTIDKIRDVARVFVNGKLAGSQVGHWVSLKQPIQLVEGLNELTLLSEIVGLQNYGAFLEKDGAGFRGQVTLTGLSDGDVDLTNSLWTYQVGLKGEFSMIYAPEKQGCAGWSRMQKDSVQPFTWYKTMFSTPKGTDPVAIDLGSMGKGQAWVNGHLIGRYWSLVAPESGCSSSCYYPGAYNERKCQSNCGMPTQNWYHIPREWLKESDNLLVLFEETGGDPSLISLEAHYAKTVCSRISENYYPPLSAWSHLSSGRASVNAATPELRLQCDDGHVISEITFASYGTPSGGCLNFSKGNCHASSTLDLVTEACVGNTKCAISVSNDVFGDPCRGVLKDLAVEAKCSPPSTTKEPRGEM.

The signal sequence occupies residues 1 to 31 (MAASRGPPLLGFRALALALLLAILLLLGCSA). N-linked (GlcNAc...) asparagine glycosylation occurs at Asn63. The Proton donor role is filled by Glu220. The active-site Nucleophile is Glu289. 4 N-linked (GlcNAc...) asparagine glycosylation sites follow: Asn412, Asn530, Asn546, and Asn855. The region spanning 822–907 (NAATPELRLQ…KDLAVEAKCS (86 aa)) is the SUEL-type lectin domain.

Belongs to the glycosyl hydrolase 35 family.

Its subcellular location is the secreted. The protein localises to the extracellular space. The protein resides in the apoplast. The enzyme catalyses Hydrolysis of terminal non-reducing beta-D-galactose residues in beta-D-galactosides.. The protein is Beta-galactosidase 15 of Oryza sativa subsp. japonica (Rice).